We begin with the raw amino-acid sequence, 245 residues long: MVNLGSIWQNLLASQAPLQSMTGNATTMAGLATYSLPQLPYAYNALEPYISAQIMELHHSKHHQTYVTNLNNALKVHVAAIASSDIPAQIAQQPAIKFNGGGHINHSLFWKNLAPAETPETNYSKAAPSLAAEIEKTWGSFDEFKKAFSAALLGIQGSGWGWLVKESTAEKGRLRIITTKDQDPVVGGEVPVFGVDMWEHAYYLQYLNGKAAYVENIWKVINWKTAEERFQGSREDAFADLKALL.

A mitochondrion-targeting transit peptide spans Met1 to Ala32. Residues His58, His106, Asp196, and His200 each contribute to the Mn(2+) site.

This sequence belongs to the iron/manganese superoxide dismutase family. As to quaternary structure, homotetramer. It depends on Mn(2+) as a cofactor.

The protein resides in the mitochondrion matrix. It carries out the reaction 2 superoxide + 2 H(+) = H2O2 + O2. Its function is as follows. Destroys superoxide anion radicals which are normally produced within the cells and which are toxic to biological systems. The chain is Superoxide dismutase [Mn], mitochondrial (sod-2) from Neurospora crassa (strain ATCC 24698 / 74-OR23-1A / CBS 708.71 / DSM 1257 / FGSC 987).